Consider the following 460-residue polypeptide: Phosphomethylpyrimidine synthase (460 aa).

Residues N80, M109, Y139, H175, 195 to 197, 236 to 239, and E275 contribute to the substrate site; these read SRG and DSLR. H279 lines the Zn(2+) pocket. Substrate is bound at residue Y302. Residue H343 participates in Zn(2+) binding. [4Fe-4S] cluster-binding residues include C423, C426, and C431.

It belongs to the ThiC family. The cofactor is [4Fe-4S] cluster.

The catalysed reaction is 5-amino-1-(5-phospho-beta-D-ribosyl)imidazole + S-adenosyl-L-methionine = 4-amino-2-methyl-5-(phosphooxymethyl)pyrimidine + CO + 5'-deoxyadenosine + formate + L-methionine + 3 H(+). It participates in cofactor biosynthesis; thiamine diphosphate biosynthesis. In terms of biological role, catalyzes the synthesis of the hydroxymethylpyrimidine phosphate (HMP-P) moiety of thiamine from aminoimidazole ribotide (AIR) in a radical S-adenosyl-L-methionine (SAM)-dependent reaction. This chain is Phosphomethylpyrimidine synthase, found in Microcystis aeruginosa (strain NIES-843 / IAM M-2473).